The sequence spans 877 residues: Phosphoenolpyruvate carboxylase (877 aa).

Residues H138 and K544 contribute to the active site.

The protein belongs to the PEPCase type 1 family. Mg(2+) serves as cofactor.

It catalyses the reaction oxaloacetate + phosphate = phosphoenolpyruvate + hydrogencarbonate. Forms oxaloacetate, a four-carbon dicarboxylic acid source for the tricarboxylic acid cycle. In Vibrio parahaemolyticus serotype O3:K6 (strain RIMD 2210633), this protein is Phosphoenolpyruvate carboxylase.